A 175-amino-acid chain; its full sequence is ATP synthase subunit b (175 aa).

A helical transmembrane segment spans residues 14-34 (LSPNPGLIFWTTVSFVIVLLI).

Belongs to the ATPase B chain family. F-type ATPases have 2 components, F(1) - the catalytic core - and F(0) - the membrane proton channel. F(1) has five subunits: alpha(3), beta(3), gamma(1), delta(1), epsilon(1). F(0) has four main subunits: a(1), b(2) and c(10-14). The alpha and beta chains form an alternating ring which encloses part of the gamma chain. F(1) is attached to F(0) by a central stalk formed by the gamma and epsilon chains, while a peripheral stalk is formed by the delta and b chains.

It localises to the cell inner membrane. In terms of biological role, f(1)F(0) ATP synthase produces ATP from ADP in the presence of a proton or sodium gradient. F-type ATPases consist of two structural domains, F(1) containing the extramembraneous catalytic core and F(0) containing the membrane proton channel, linked together by a central stalk and a peripheral stalk. During catalysis, ATP synthesis in the catalytic domain of F(1) is coupled via a rotary mechanism of the central stalk subunits to proton translocation. Functionally, component of the F(0) channel, it forms part of the peripheral stalk, linking F(1) to F(0). This Chlorobium phaeobacteroides (strain DSM 266 / SMG 266 / 2430) protein is ATP synthase subunit b.